The primary structure comprises 607 residues: Chaperone protein DnaK (607 aa).

Position 173 is a phosphothreonine; by autocatalysis (Thr-173). Basic and acidic residues-rich tracts occupy residues 490 to 509 (EQNA…RNEA) and 524 to 542 (GDNV…KEAL). 3 disordered regions span residues 490 to 510 (EQNA…NEAD), 524 to 555 (GDNV…EDIK), and 574 to 607 (QQAQ…KDNK). Polar residues predominate over residues 574–587 (QQAQQGDAAGSNQS). The span at 595-607 (TEVKDDDDKKDNK) shows a compositional bias: basic and acidic residues.

This sequence belongs to the heat shock protein 70 family.

In terms of biological role, acts as a chaperone. The sequence is that of Chaperone protein DnaK from Staphylococcus carnosus (strain TM300).